The chain runs to 156 residues: ATP synthase subunit b (156 aa).

Residues 11 to 31 (AIAFFIFVVFCMKYVWPPLMA) traverse the membrane as a helical segment.

This sequence belongs to the ATPase B chain family. In terms of assembly, F-type ATPases have 2 components, F(1) - the catalytic core - and F(0) - the membrane proton channel. F(1) has five subunits: alpha(3), beta(3), gamma(1), delta(1), epsilon(1). F(0) has three main subunits: a(1), b(2) and c(10-14). The alpha and beta chains form an alternating ring which encloses part of the gamma chain. F(1) is attached to F(0) by a central stalk formed by the gamma and epsilon chains, while a peripheral stalk is formed by the delta and b chains.

The protein localises to the cell inner membrane. Its function is as follows. F(1)F(0) ATP synthase produces ATP from ADP in the presence of a proton or sodium gradient. F-type ATPases consist of two structural domains, F(1) containing the extramembraneous catalytic core and F(0) containing the membrane proton channel, linked together by a central stalk and a peripheral stalk. During catalysis, ATP synthesis in the catalytic domain of F(1) is coupled via a rotary mechanism of the central stalk subunits to proton translocation. Functionally, component of the F(0) channel, it forms part of the peripheral stalk, linking F(1) to F(0). The polypeptide is ATP synthase subunit b (Aeromonas hydrophila subsp. hydrophila (strain ATCC 7966 / DSM 30187 / BCRC 13018 / CCUG 14551 / JCM 1027 / KCTC 2358 / NCIMB 9240 / NCTC 8049)).